The chain runs to 122 residues: UPF0145 protein Bmul_3577/BMULJ_04940 (122 aa).

This sequence belongs to the UPF0145 family.

This is UPF0145 protein Bmul_3577/BMULJ_04940 from Burkholderia multivorans (strain ATCC 17616 / 249).